Reading from the N-terminus, the 879-residue chain is Translation initiation factor IF-2 (879 aa).

Residues 48-261 (EAFPPPPEPA…RPHKSKKQRR (214 aa)) form a disordered region. Residues 82-111 (PAADAAAPPAVTTPPSAAPAGATTSAPSDA) are compositionally biased toward low complexity. Pro residues-rich tracts occupy residues 119-142 (PPRP…PSGP), 152-163 (SPMPRPMPPRPV), and 173-197 (PGIP…PPRP). A compositionally biased stretch (low complexity) spans 198-213 (AAGRAAPGRGAPIRLP). The span at 228–246 (PGVGGRGRGAPGGAFGRGP) shows a compositional bias: gly residues. A compositionally biased stretch (basic residues) spans 251–260 (SRPHKSKKQR). The region spanning 372–543 (PRPPVVTVMG…AILLTADAAL (172 aa)) is the tr-type G domain. Residues 381–388 (GHVDHGKT) are G1. GTP is bound at residue 381-388 (GHVDHGKT). The segment at 406-410 (GITQH) is G2. A G3 region spans residues 431–434 (DTPG). GTP contacts are provided by residues 431 to 435 (DTPGH) and 485 to 488 (NKID). The G4 stretch occupies residues 485 to 488 (NKID). The G5 stretch occupies residues 521-523 (SAL).

Belongs to the TRAFAC class translation factor GTPase superfamily. Classic translation factor GTPase family. IF-2 subfamily.

Its subcellular location is the cytoplasm. In terms of biological role, one of the essential components for the initiation of protein synthesis. Protects formylmethionyl-tRNA from spontaneous hydrolysis and promotes its binding to the 30S ribosomal subunits. Also involved in the hydrolysis of GTP during the formation of the 70S ribosomal complex. This Acidothermus cellulolyticus (strain ATCC 43068 / DSM 8971 / 11B) protein is Translation initiation factor IF-2.